The chain runs to 218 residues: Peroxynitrite isomerase 2 (218 aa).

The disordered stretch occupies residues M1 to A24. The span at T7–A24 shows a compositional bias: basic and acidic residues. Residues G65 to G71 carry the GXWXGXG motif. 2 residues coordinate heme b: K181 and H208.

The protein belongs to the nitrobindin family. Homodimer. Heme b is required as a cofactor.

The enzyme catalyses peroxynitrite = nitrate. Its pathway is nitrogen metabolism. In terms of biological role, heme-binding protein able to scavenge peroxynitrite and to protect free L-tyrosine against peroxynitrite-mediated nitration, by acting as a peroxynitrite isomerase that converts peroxynitrite to nitrate. Therefore, this protein likely plays a role in peroxynitrite sensing and in the detoxification of reactive nitrogen and oxygen species (RNS and ROS, respectively). Is able to bind nitric oxide (NO) in vitro, but may act as a sensor of peroxynitrite levels in vivo. This chain is Peroxynitrite isomerase 2, found in Mycolicibacterium smegmatis (strain ATCC 700084 / mc(2)155) (Mycobacterium smegmatis).